Here is a 411-residue protein sequence, read N- to C-terminus: MTTPADDQGKSPENPWPVRAVATRVAKYIDRLGMVWIEGQLTELKIRQTTAWMVLRDPAADMSLSVSCPRDLVANAPVPLSEGTQVIVLGKPQFYTRNGSFSLRISEIRAVGIGELLARIDRLRRLLDAEGLFDPRLKRPIPFLPGTIGLITGRASHAERDVMTVAANRWPAVRFAVRNTIVQGPNAVPQIVGALRELDRDPGVDVIVLARGGGSVEDLLPFSDETLCREIASCTTPVVSAVGHEPDNPLCDLVADLRAATPTDAAKRVVPDAAAEQAFVTDLRRRSARALRQWVHREQHHLDQLRSRPVLARPLQAIDARADEVHRAVAAARRDVRRMVTVESERVGHLSARLTTLGPAATLARGYAVVQTMPDTNVLRTTADAPAGTHLRIRVADGAITAVSEGTDEAH.

It belongs to the XseA family. Heterooligomer composed of large and small subunits.

It is found in the cytoplasm. The enzyme catalyses Exonucleolytic cleavage in either 5'- to 3'- or 3'- to 5'-direction to yield nucleoside 5'-phosphates.. Its function is as follows. Bidirectionally degrades single-stranded DNA into large acid-insoluble oligonucleotides, which are then degraded further into small acid-soluble oligonucleotides. The protein is Exodeoxyribonuclease 7 large subunit of Mycobacterium sp. (strain KMS).